Consider the following 194-residue polypeptide: Glycerol-3-phosphate acyltransferase (194 aa).

Helical transmembrane passes span isoleucine 3–glycine 23, valine 47–proline 67, isoleucine 78–leucine 97, isoleucine 112–phenylalanine 132, and leucine 153–isoleucine 173.

The protein belongs to the PlsY family. As to quaternary structure, probably interacts with PlsX.

It is found in the cell membrane. It catalyses the reaction an acyl phosphate + sn-glycerol 3-phosphate = a 1-acyl-sn-glycero-3-phosphate + phosphate. It participates in lipid metabolism; phospholipid metabolism. Its function is as follows. Catalyzes the transfer of an acyl group from acyl-phosphate (acyl-PO(4)) to glycerol-3-phosphate (G3P) to form lysophosphatidic acid (LPA). This enzyme utilizes acyl-phosphate as fatty acyl donor, but not acyl-CoA or acyl-ACP. The polypeptide is Glycerol-3-phosphate acyltransferase (Macrococcus caseolyticus (strain JCSC5402) (Macrococcoides caseolyticum)).